The chain runs to 480 residues: Thyroid receptor-interacting protein 6 (480 aa).

Over residues 1-12 (MSGPTWLPPKQP) the composition is skewed to pro residues. The interval 1–43 (MSGPTWLPPKQPEPSRLPQGRSLPRGALGPPTAHGATLQPHPR) is disordered. R25 bears the Asymmetric dimethylarginine; alternate mark. The residue at position 25 (R25) is an Omega-N-methylarginine; alternate. At Y55 the chain carries Phosphotyrosine; by SRC. Residues 57-84 (PPGVPEDRGPTWVGSHGTPQRLQGLPPD) form a disordered region. S92 bears the Phosphoserine mark. The interval 107–134 (LDGGRSHAPRRPDRQAFEAPPPHAYRGG) is disordered. The segment covering 108–122 (DGGRSHAPRRPDRQA) has biased composition (basic and acidic residues). An omega-N-methylarginine mark is found at R111, R183, and R190. S193 carries the post-translational modification Phosphoserine. Residues R209 and R242 each carry the omega-N-methylarginine modification. The interval 218-257 (RSHREPGPGVPEGPSGVHIPAGGGRGGGHEPQGPLGQPPE) is disordered. Residues 238–247 (AGGGRGGGHE) show a composition bias toward gly residues. LIM zinc-binding domains lie at 281–339 (GRCG…YVAT), 341–401 (EKCS…KFAP), and 404–471 (SVCG…RIQE). Positions 473–480 (SATVTTDC) are interaction with MAGI1 and PTPN13.

This sequence belongs to the zyxin/ajuba family. In terms of assembly, specifically interacts with the ligand binding domain of the thyroid receptor (TR) in the presence of thyroid hormone. Interacts (via the third LIM domain and C-terminus) with PTPN13 (via the second PDZ domain). Interacts (via the second LIM domain or via the third LIM domain plus C-terminus) with PDLIM4 (via PDZ domain). Found in a complex with PTPN13 and PDLIM4. Interacts with SVIL isoform 2. Interacts with LPAR2 but not other LPA receptors. Interacts with PRKAA2. Interacts with MAGI1. Interacts with SCRIB. In case of infection, interacts with S.typhimurium protein sseI. Post-translationally, phosphorylation at Tyr-55 by SRC is required for enhancement of lysophosphatidic acid-induced cell migration. Tyr-55 is dephosphorylated by PTPN13. Highly expressed in kidney, stomach, lung, heart and testis. Low expression levels in brain, colon, thymus, pancreas and skin. Not expressed in skeletal muscle.

The protein localises to the cytoplasm. It localises to the cytoskeleton. Its subcellular location is the cell junction. The protein resides in the focal adhesion. It is found in the nucleus. Functionally, relays signals from the cell surface to the nucleus to weaken adherens junction and promote actin cytoskeleton reorganization and cell invasiveness. Involved in lysophosphatidic acid-induced cell adhesion and migration. Acts as a transcriptional coactivator for NF-kappa-B and JUN, and mediates the transrepression of these transcription factors induced by glucocorticoid receptor. The chain is Thyroid receptor-interacting protein 6 (Trip6) from Mus musculus (Mouse).